Here is a 294-residue protein sequence, read N- to C-terminus: 33 kDa chaperonin (294 aa).

2 cysteine pairs are disulfide-bonded: C235/C237 and C268/C271.

It belongs to the HSP33 family. Under oxidizing conditions two disulfide bonds are formed involving the reactive cysteines. Under reducing conditions zinc is bound to the reactive cysteines and the protein is inactive.

It is found in the cytoplasm. Functionally, redox regulated molecular chaperone. Protects both thermally unfolding and oxidatively damaged proteins from irreversible aggregation. Plays an important role in the bacterial defense system toward oxidative stress. The sequence is that of 33 kDa chaperonin from Proteus mirabilis (strain HI4320).